Here is a 455-residue protein sequence, read N- to C-terminus: Aminopeptidase YwaD (455 aa).

Residues 1 to 31 (MKKLLTVMTMAVLTAGTLLLPAQSVTPAAHA) form the signal peptide. Positions 250, 262, 295, 323, and 401 each coordinate Zn(2+).

The protein belongs to the peptidase M28 family. M28B subfamily. As to quaternary structure, monomer. Zn(2+) is required as a cofactor.

The protein localises to the secreted. The enzyme catalyses Release of N-terminal Arg and Lys from oligopeptides when P1' is not Pro. Also acts on arylamides of Arg and Lys.. It carries out the reaction Release of an N-terminal amino acid, preferentially leucine, but not glutamic or aspartic acids.. Functionally, catalyzes the hydrolysis of a range of N-terminal amino acids. The sequence is that of Aminopeptidase YwaD (ywaD) from Bacillus subtilis (strain 168).